Reading from the N-terminus, the 531-residue chain is 2,3-bisphosphoglycerate-independent phosphoglycerate mutase (531 aa).

Residues Asp-13 and Ser-63 each contribute to the Mn(2+) site. The active-site Phosphoserine intermediate is Ser-63. Residues His-124, Arg-154–Asp-155, Arg-187, Arg-193, Arg-261–Arg-264, and Lys-342 contribute to the substrate site. The Mn(2+) site is built by Asp-420, His-424, Asp-462, His-463, and His-480.

Belongs to the BPG-independent phosphoglycerate mutase family. In terms of assembly, monomer. Mn(2+) serves as cofactor.

It catalyses the reaction (2R)-2-phosphoglycerate = (2R)-3-phosphoglycerate. It participates in carbohydrate degradation; glycolysis; pyruvate from D-glyceraldehyde 3-phosphate: step 3/5. In terms of biological role, catalyzes the interconversion of 2-phosphoglycerate and 3-phosphoglycerate. The protein is 2,3-bisphosphoglycerate-independent phosphoglycerate mutase of Mycoplasma capricolum subsp. capricolum (strain California kid / ATCC 27343 / NCTC 10154).